Consider the following 352-residue polypeptide: Maleylacetate reductase (352 aa).

Residues 93–94 and 115–119 contribute to the NAD(+) site; these read GS and TTYAG.

This sequence belongs to the iron-containing alcohol dehydrogenase family. It depends on The maleylacetate reductase family of enzymes does not require any metal ion for activity, despite being related to the family III metal-dependent polyol dehydrogenases. as a cofactor.

It catalyses the reaction 3-oxoadipate + NAD(+) = maleylacetate + NADH + H(+). The protein operates within xenobiotic degradation; gamma-hexachlorocyclohexane degradation. Functionally, catalyzes the NADH-dependent reduction of maleylacetate to beta-ketoadipate, a step in the degradation of gamma-hexachlorocyclohexane (gamma-HCH or lindane). Has an essential role in this assimilation pathway that allows S.japonicum UT26 to grow on gamma-HCH as the sole source of carbon and energy. The sequence is that of Maleylacetate reductase from Sphingobium indicum (strain DSM 16413 / CCM 7287 / MTCC 6362 / UT26 / NBRC 101211 / UT26S) (Sphingobium japonicum).